The sequence spans 332 residues: Probable L-asparaginase (332 aa).

An Asparaginase/glutaminase domain is found at 6 to 332; sequence PTIALLATGG…AKIQEMFEEY (327 aa). Thr-16 serves as the catalytic O-isoaspartyl threonine intermediate. Substrate contacts are provided by residues Ser-62 and 95-96; that span reads TD.

This sequence belongs to the asparaginase 1 family.

Its subcellular location is the cytoplasm. It catalyses the reaction L-asparagine + H2O = L-aspartate + NH4(+). The sequence is that of Probable L-asparaginase (ansA) from Helicobacter pylori (strain J99 / ATCC 700824) (Campylobacter pylori J99).